The sequence spans 877 residues: DNA polymerase I (877 aa).

Positions 180–270 (TPAQFIDLKA…EIGLDDTLLK (91 aa)) constitute a 5'-3' exonuclease domain. The 161-residue stretch at 308 to 468 (DEIDFEIVTD…AKEKMMAELL (161 aa)) folds into the 3'-5' exonuclease domain.

This sequence belongs to the DNA polymerase type-A family. In terms of assembly, single-chain monomer with multiple functions.

It catalyses the reaction DNA(n) + a 2'-deoxyribonucleoside 5'-triphosphate = DNA(n+1) + diphosphate. In addition to polymerase activity, this DNA polymerase exhibits 3'-5' and 5'-3' exonuclease activity. This Lactococcus lactis subsp. lactis (strain IL1403) (Streptococcus lactis) protein is DNA polymerase I (polA).